A 4427-amino-acid chain; its full sequence is Dynein axonemal heavy chain 2 (4427 aa).

The tract at residues 1–73 (MSSKAEKKQR…AQSEESVEPE (73 aa)) is disordered. The stem stretch occupies residues 1-1764 (MSSKAEKKQR…VIRQTNTQFQ (1764 aa)). The segment covering 14–23 (RGSSQASWSG) has biased composition (polar residues). A compositionally biased stretch (basic and acidic residues) spans 50–59 (LPKEEPEPRL). One copy of the TPR 1 repeat lies at 1404 to 1439 (EDNQVALSTMKASRFVKAFEKDVDHWERCLSLILEV). AAA regions lie at residues 1765 to 1986 (YNYE…LLRY), 2046 to 2273 (ETVE…DNCK), 2378 to 2625 (RYPP…VFQG), and 2722 to 2974 (EYNL…LRRH). Residues 1803-1810 (GPAGTGKT), 2084-2091 (GCTGSGKT), and 2416-2423 (GPVGTGKT) each bind ATP. Residues 2721-2754 (NEYNLSPSVVPMQLVLFREAIEHITRIVRVIGQP) form a TPR 2 repeat. Residue 2762 to 2769 (GIGGSGRQ) participates in ATP binding. The stalk stretch occupies residues 2989 to 3272 (YKKLLGEKRQ…EELRKKSEEM (284 aa)). A coiled-coil region spans residues 3012–3049 (FKIDETREKVQVMSLELEDAKKKVAEFQKQCEEYLVII). The stretch at 3072–3105 (VEEIKCQALADNAQKDLEEALPALEEAMRALESL) is one TPR 3 repeat. 2 coiled-coil regions span residues 3216–3304 (KRIR…EEDL) and 3523–3567 (VRKE…GSLL). 2 AAA regions span residues 3358-3588 (LCNP…EVTE) and 3804-4023 (VTSF…LLSL). 2 TPR repeats span residues 4072–4104 (STPF…LLPG) and 4105–4140 (MDPP…QPQI).

This sequence belongs to the dynein heavy chain family. Part of the axonemal inner dynein arm complex that consists of at least two heavy chains and a number of intermediate and light chains. Interacts with DNAI4. Expressed primarily in trachea and testis, 2 tissues containing axonemal structures. Also expressed in lung. Expressed in spermatozoa (at protein level).

Its subcellular location is the cytoplasm. It localises to the cytoskeleton. The protein localises to the cilium axoneme. It is found in the flagellum axoneme. In terms of biological role, as part of the axonemal inner dynein arm complex plays a central role in ciliary beat. Expressed in sperm flagellum, it is required for sperm motility. Dyneins are microtubule-based molecular motors possessing ATPase activities that can convert the chemical energy of ATP into relative sliding between adjacent microtubule doublets to generate ciliary bending. This Homo sapiens (Human) protein is Dynein axonemal heavy chain 2.